The primary structure comprises 213 residues: MSDRAMVVRVRQHVNPLSQKFQQDIPVPDWSRIYEQPSQPLHLDIGCARGTFLLEMAALYPEQNFLGLEIRYPLVVAANERRDRQQLRNLHYLWGNANVHLSKILGGLPLHTVTIQFPDPWFKRRHHKRRVVTPELVATLAELLPAGGRVVLQSDVFEVAESMVQQFRAHGAFRSTCTDWLPQSPWPVATEREKCVLNKGLAVYRWQFERCAV.

S-adenosyl-L-methionine is bound by residues D44, E69, N96, and D119. D119 is a catalytic residue. Residues K123 and D155 each coordinate substrate.

Belongs to the class I-like SAM-binding methyltransferase superfamily. TrmB family.

It catalyses the reaction guanosine(46) in tRNA + S-adenosyl-L-methionine = N(7)-methylguanosine(46) in tRNA + S-adenosyl-L-homocysteine. It functions in the pathway tRNA modification; N(7)-methylguanine-tRNA biosynthesis. Functionally, catalyzes the formation of N(7)-methylguanine at position 46 (m7G46) in tRNA. The sequence is that of tRNA (guanine-N(7)-)-methyltransferase from Thermosynechococcus vestitus (strain NIES-2133 / IAM M-273 / BP-1).